The following is an 804-amino-acid chain: Lon protease 2 (804 aa).

One can recognise a Lon N-terminal domain in the interval methionine 6 to leucine 199. ATP is bound at residue glycine 362–threonine 369. In terms of domain architecture, Lon proteolytic spans glutamate 598–glycine 779. Active-site residues include serine 685 and lysine 728.

Belongs to the peptidase S16 family. Homohexamer. Organized in a ring with a central cavity.

The protein localises to the cytoplasm. It catalyses the reaction Hydrolysis of proteins in presence of ATP.. In terms of biological role, ATP-dependent serine protease that mediates the selective degradation of mutant and abnormal proteins as well as certain short-lived regulatory proteins. Required for cellular homeostasis and for survival from DNA damage and developmental changes induced by stress. Degrades polypeptides processively to yield small peptide fragments that are 5 to 10 amino acids long. Binds to DNA in a double-stranded, site-specific manner. The protein is Lon protease 2 of Thermus thermophilus (strain ATCC BAA-163 / DSM 7039 / HB27).